Here is a 731-residue protein sequence, read N- to C-terminus: DNA topoisomerase 1 (731 aa).

Residues 17–130 (KHLVIVESPA…KRIVFNEITP (114 aa)) enclose the Toprim domain. The Mg(2+) site is built by Glu-23 and Asp-96. The Topo IA-type catalytic domain occupies 144–569 (DTAKVNAQKA…DFYPAFSEKV (426 aa)). The segment at 178–183 (SAGRVQ) is interaction with DNA. Catalysis depends on Tyr-312, which acts as the O-(5'-phospho-DNA)-tyrosine intermediate. C4-type zinc fingers lie at residues 591 to 617 (CSQC…FPEC), 628 to 657 (CPRP…FPVC), and 670 to 696 (CPQC…NPEC).

The protein belongs to the type IA topoisomerase family. In terms of assembly, monomer. Mg(2+) serves as cofactor.

It carries out the reaction ATP-independent breakage of single-stranded DNA, followed by passage and rejoining.. Functionally, releases the supercoiling and torsional tension of DNA, which is introduced during the DNA replication and transcription, by transiently cleaving and rejoining one strand of the DNA duplex. Introduces a single-strand break via transesterification at a target site in duplex DNA. The scissile phosphodiester is attacked by the catalytic tyrosine of the enzyme, resulting in the formation of a DNA-(5'-phosphotyrosyl)-enzyme intermediate and the expulsion of a 3'-OH DNA strand. The free DNA strand then undergoes passage around the unbroken strand, thus removing DNA supercoils. Finally, in the religation step, the DNA 3'-OH attacks the covalent intermediate to expel the active-site tyrosine and restore the DNA phosphodiester backbone. The chain is DNA topoisomerase 1 from Treponema pallidum (strain Nichols).